A 442-amino-acid chain; its full sequence is tRNA modification GTPase MnmE (442 aa).

Residues Arg-21, Glu-79, and Lys-118 each contribute to the (6S)-5-formyl-5,6,7,8-tetrahydrofolate site. Residues 215–365 (GLKIAIVGKP…LENKLSSYCN (151 aa)) enclose the TrmE-type G domain. GTP-binding positions include 225 to 230 (NVGKSS), 244 to 250 (TNEAGTT), and 269 to 272 (DTAG). Mg(2+) contacts are provided by Ser-229 and Thr-250. Residue Lys-442 coordinates (6S)-5-formyl-5,6,7,8-tetrahydrofolate.

The protein belongs to the TRAFAC class TrmE-Era-EngA-EngB-Septin-like GTPase superfamily. TrmE GTPase family. As to quaternary structure, homodimer. Heterotetramer of two MnmE and two MnmG subunits. It depends on K(+) as a cofactor.

The protein resides in the cytoplasm. Its function is as follows. Exhibits a very high intrinsic GTPase hydrolysis rate. Involved in the addition of a carboxymethylaminomethyl (cmnm) group at the wobble position (U34) of certain tRNAs, forming tRNA-cmnm(5)s(2)U34. The polypeptide is tRNA modification GTPase MnmE (Mycoplasma mobile (strain ATCC 43663 / 163K / NCTC 11711) (Mesomycoplasma mobile)).